A 346-amino-acid polypeptide reads, in one-letter code: tRNA N6-adenosine threonylcarbamoyltransferase (346 aa).

The Fe cation site is built by His111 and His115. Residues 134–138 (LVSGG), Asp167, Gly180, Asp184, and Asn279 each bind substrate. Asp307 serves as a coordination point for Fe cation.

Belongs to the KAE1 / TsaD family. Fe(2+) serves as cofactor.

Its subcellular location is the cytoplasm. It carries out the reaction L-threonylcarbamoyladenylate + adenosine(37) in tRNA = N(6)-L-threonylcarbamoyladenosine(37) in tRNA + AMP + H(+). Required for the formation of a threonylcarbamoyl group on adenosine at position 37 (t(6)A37) in tRNAs that read codons beginning with adenine. Is involved in the transfer of the threonylcarbamoyl moiety of threonylcarbamoyl-AMP (TC-AMP) to the N6 group of A37, together with TsaE and TsaB. TsaD likely plays a direct catalytic role in this reaction. In Gloeothece citriformis (strain PCC 7424) (Cyanothece sp. (strain PCC 7424)), this protein is tRNA N6-adenosine threonylcarbamoyltransferase.